A 261-amino-acid polypeptide reads, in one-letter code: DNA-directed RNA polymerase subunit Rpo3 (261 aa).

It belongs to the archaeal Rpo3/eukaryotic RPB3 RNA polymerase subunit family. In terms of assembly, part of the RNA polymerase complex.

The protein resides in the cytoplasm. It catalyses the reaction RNA(n) + a ribonucleoside 5'-triphosphate = RNA(n+1) + diphosphate. In terms of biological role, DNA-dependent RNA polymerase (RNAP) catalyzes the transcription of DNA into RNA using the four ribonucleoside triphosphates as substrates. The chain is DNA-directed RNA polymerase subunit Rpo3 from Pyrococcus furiosus (strain ATCC 43587 / DSM 3638 / JCM 8422 / Vc1).